Reading from the N-terminus, the 481-residue chain is Protein nucleotidyltransferase YdiU (481 aa).

8 residues coordinate ATP: Gly85, Gly87, Arg88, Lys108, Asp120, Gly121, Arg171, and Arg178. Asp248 serves as the catalytic Proton acceptor. The Mg(2+) site is built by Asn249 and Asp258. Asp258 serves as a coordination point for ATP. The tract at residues 458 to 481 (HPGLAEFQQPPTPEQKGLQLSCSS) is disordered.

This sequence belongs to the SELO family. It depends on Mg(2+) as a cofactor. The cofactor is Mn(2+).

It carries out the reaction L-seryl-[protein] + ATP = 3-O-(5'-adenylyl)-L-seryl-[protein] + diphosphate. The catalysed reaction is L-threonyl-[protein] + ATP = 3-O-(5'-adenylyl)-L-threonyl-[protein] + diphosphate. It catalyses the reaction L-tyrosyl-[protein] + ATP = O-(5'-adenylyl)-L-tyrosyl-[protein] + diphosphate. The enzyme catalyses L-histidyl-[protein] + UTP = N(tele)-(5'-uridylyl)-L-histidyl-[protein] + diphosphate. It carries out the reaction L-seryl-[protein] + UTP = O-(5'-uridylyl)-L-seryl-[protein] + diphosphate. The catalysed reaction is L-tyrosyl-[protein] + UTP = O-(5'-uridylyl)-L-tyrosyl-[protein] + diphosphate. In terms of biological role, nucleotidyltransferase involved in the post-translational modification of proteins. It can catalyze the addition of adenosine monophosphate (AMP) or uridine monophosphate (UMP) to a protein, resulting in modifications known as AMPylation and UMPylation. The polypeptide is Protein nucleotidyltransferase YdiU (Hydrogenovibrio crunogenus (strain DSM 25203 / XCL-2) (Thiomicrospira crunogena)).